A 395-amino-acid chain; its full sequence is Dual specificity mitogen-activated protein kinase kinase 1 (395 aa).

The segment at 1 to 24 is disordered; it reads MPKKKPTPIQLNPNPEGTAVNGTP. The segment covering 9 to 24 has biased composition (polar residues); sequence IQLNPNPEGTAVNGTP. Positions 68-363 constitute a Protein kinase domain; that stretch reads FEKVSELGAG…LKQLMVHSFI (296 aa). ATP is bound by residues 74–82 and K97; that span reads LGAGNGGVV. D190 (proton acceptor) is an active-site residue. 2 positions are modified to phosphoserine; by RAF: S218 and S222. Residues 284–305 are disordered; the sequence is ASSELAPRPRPPGRPISSYGPD.

This sequence belongs to the protein kinase superfamily. STE Ser/Thr protein kinase family. MAP kinase kinase subfamily. Post-translationally, activated by phosphorylation on Ser/Thr catalyzed by MAP kinase kinase kinases (RAF or MOS). In terms of tissue distribution, expressed in the central nervous system, kidney, liver, intestine and the hematopoietic system.

The protein localises to the cytoplasm. It is found in the cytoskeleton. It localises to the microtubule organizing center. The protein resides in the centrosome. Its subcellular location is the spindle pole body. The protein localises to the nucleus. It catalyses the reaction L-seryl-[protein] + ATP = O-phospho-L-seryl-[protein] + ADP + H(+). The catalysed reaction is L-threonyl-[protein] + ATP = O-phospho-L-threonyl-[protein] + ADP + H(+). It carries out the reaction L-tyrosyl-[protein] + ATP = O-phospho-L-tyrosyl-[protein] + ADP + H(+). Its function is as follows. Dual specificity protein kinase which acts as an essential component of the MAP kinase signal transduction pathway. Binding of extracellular ligands such as growth factors, cytokines and hormones to their cell-surface receptors activates the MAPK/ERK cascade, ultimately leading to phosphorylation of a threonine and a tyrosine residue in a Thr-Glu-Tyr sequence located in MAP kinases. Depending on the cellular context, this pathway mediates diverse biological functions such as cell growth, adhesion, survival and differentiation predominantly through the regulation of transcription, metabolism and cytoskeletal rearrangements. In Xenopus laevis (African clawed frog), this protein is Dual specificity mitogen-activated protein kinase kinase 1 (map2k1).